Consider the following 465-residue polypeptide: MKWDKLLNDKRRRESGVTRSKNTDVRSAFENDFQRIVMSASFRRLQDKTQVFPLEKSDFVRTRLTHSMEVSTIAKSMGNMVTHTIQEEKLDQDFTKDHADKIPEILACAGLLHDMGNPPFGHFGEESIREWFRDNLATITYKNKSLAEILTPQMKEDFYYFEGNAQVLRVVSKLHYLFDQYGLNLTFATLNAVIKYPVSSLKVNKKQIKSKKLGYFYADESLFNEITTATEALDNRHPLTYLLEVADDIAYLNADLEDGVKKGIVNITQILKGFEEVEEHNKVTAACYNELKKKSERYEGQEESFIVQQWLASNVRGQLINRSLEVFYENYDAIMAGTFNDSLIDASSAEQLVQILQSLSFTYIYQDKGIVESEIAGNEIISKLLETFIPAVIYYDSETPERQTAKDKRLLTLISDNYLGCYRKNAEGESETMKLYLRLLLVTDFICGMTDSYAKDLYQRLNGLS.

Residues 1 to 22 (MKWDKLLNDKRRRESGVTRSKN) are disordered. In terms of domain architecture, HD spans 63 to 252 (RLTHSMEVST…LEVADDIAYL (190 aa)).

Belongs to the dGTPase family. Type 3 subfamily.

The polypeptide is Deoxyguanosinetriphosphate triphosphohydrolase-like protein (Listeria innocua serovar 6a (strain ATCC BAA-680 / CLIP 11262)).